Consider the following 330-residue polypeptide: Peptide transport system ATP-binding protein SapD (330 aa).

In terms of domain architecture, ABC transporter spans 6–259 (IRNLTIEFKT…PHHPYTQALI (254 aa)). 40–47 (GESGSGKS) contacts ATP.

The protein belongs to the ABC transporter superfamily.

It localises to the cell inner membrane. Its function is as follows. Involved in a peptide intake transport system that plays a role in the resistance to antimicrobial peptides. This chain is Peptide transport system ATP-binding protein SapD, found in Salmonella typhimurium (strain LT2 / SGSC1412 / ATCC 700720).